A 210-amino-acid polypeptide reads, in one-letter code: Uracil phosphoribosyltransferase (210 aa).

5-phospho-alpha-D-ribose 1-diphosphate-binding positions include Arg80, Arg105, and 132 to 140 (DPMLATGGS). Residues Ile195 and 200–202 (GDA) each bind uracil. Residue Asp201 coordinates 5-phospho-alpha-D-ribose 1-diphosphate.

The protein belongs to the UPRTase family. Mg(2+) is required as a cofactor.

The enzyme catalyses UMP + diphosphate = 5-phospho-alpha-D-ribose 1-diphosphate + uracil. It participates in pyrimidine metabolism; UMP biosynthesis via salvage pathway; UMP from uracil: step 1/1. Allosterically activated by GTP. Its function is as follows. Catalyzes the conversion of uracil and 5-phospho-alpha-D-ribose 1-diphosphate (PRPP) to UMP and diphosphate. This Deinococcus radiodurans (strain ATCC 13939 / DSM 20539 / JCM 16871 / CCUG 27074 / LMG 4051 / NBRC 15346 / NCIMB 9279 / VKM B-1422 / R1) protein is Uracil phosphoribosyltransferase.